The following is a 313-amino-acid chain: D-alanine--D-alanine ligase (313 aa).

The region spanning lysine 108–serine 308 is the ATP-grasp domain. ATP is bound at residue valine 138 to tyrosine 193. Mg(2+) contacts are provided by aspartate 262, glutamate 275, and asparagine 277.

The protein belongs to the D-alanine--D-alanine ligase family. Mg(2+) serves as cofactor. The cofactor is Mn(2+).

It is found in the cytoplasm. The enzyme catalyses 2 D-alanine + ATP = D-alanyl-D-alanine + ADP + phosphate + H(+). It participates in cell wall biogenesis; peptidoglycan biosynthesis. In terms of biological role, cell wall formation. The chain is D-alanine--D-alanine ligase from Burkholderia ambifaria (strain MC40-6).